Here is a 506-residue protein sequence, read N- to C-terminus: Histidine--tRNA ligase, mitochondrial (506 aa).

The transit peptide at Met1–Cys33 directs the protein to the mitochondrion. Ser67 carries the phosphoserine modification. Residues Asp131 to Thr133, Arg158, Gln174, Asp178, Arg327, and Tyr331 to Tyr332 contribute to the L-histidine site. An N6-acetyllysine modification is found at Lys444.

The protein belongs to the class-II aminoacyl-tRNA synthetase family. In terms of assembly, homodimer. In terms of tissue distribution, a high level expression is seen in the heart, kidney and skeletal muscle while a lower level expression is seen in the brain and liver.

The protein localises to the mitochondrion. The catalysed reaction is tRNA(His) + L-histidine + ATP = L-histidyl-tRNA(His) + AMP + diphosphate + H(+). Mitochondrial aminoacyl-tRNA synthetase that catalyzes the ATP-dependent ligation of histidine to the 3'-end of its cognate tRNA, via the formation of an aminoacyl-adenylate intermediate (His-AMP). The chain is Histidine--tRNA ligase, mitochondrial (HARS2) from Homo sapiens (Human).